We begin with the raw amino-acid sequence, 204 residues long: Small rubber particle protein (204 aa).

It belongs to the REF/SRPP family. As to quaternary structure, auto-assembles in solution into stable nanomultimers of a globular nature. In terms of processing, not glycosylated. Post-translationally, the N-terminus is blocked. Consistent shifts of about 266 Da observed by MS in various forms of the intact protein suggest the addition of stearolyl groups. In terms of tissue distribution, highly expressed in the specialized vessel laticifers, but localized only in the laticifer layers in the conducting phloem. Also detected in leaves.

Its subcellular location is the cytoplasm. Involved in the biosynthesis of rubber, an isoprenoid polymer (cis-1,4-polyisoprene). This chain is Small rubber particle protein, found in Hevea brasiliensis (Para rubber tree).